The sequence spans 1659 residues: eIF-2-alpha kinase GCN2 (1659 aa).

Residues 17–128 enclose the RWD domain; it reads NELEAIRSIY…SFTQEKLDEF (112 aa). The disordered stretch occupies residues 149–170; that stretch reads KEQLEKEEREKQQETIKKRSDE. Protein kinase domains follow at residues 256-527 and 599-981; these read LVKP…MKFL and FEEI…SGWL. ATP is bound by residues 605–613 and Lys628; that span reads LGQGAFGQV. Disordered stretches follow at residues 671–691 and 727–768; these read NVFE…DFEE and FENS…VPRR. At Ser761 the chain carries Phosphoserine. Catalysis depends on Asp835, which acts as the Proton acceptor. Residues Thr882 and Thr887 each carry the phosphothreonine; by autocatalysis modification. Residues 999–1519 form a histidyl-tRNA synthetase-like region; it reads NPSSPWQQQV…EFKRWDENSS (521 aa).

Belongs to the protein kinase superfamily. Ser/Thr protein kinase family. GCN2 subfamily. In terms of assembly, homodimer; homodimerization is important for kinase activation by uncharged tRNAs. Interacts (via N-terminal RWD domain) with GCN1 (via N- and C-terminus); this interaction stimulates GCN2 kinase activity in a GCN20-dependent manner in response to amino acid starvation. Interacts (via N-terminus) with the GCN1-GCN20 complex on translating ribosomes in amino acid-starved cells; GCN1 may bind near the ribosomal A-site and promotes the transfer of uncharged tRNAs from the A-site to the tRNA-binding domain in GCN2 for its subsequent kinase activation, and hence allowing GCN4 translational activation and derepression of amino acid biosynthetic genes. Interacts (via C-terminus) with TIF11; this interaction is direct, occurs in amino acid-repleted cells, may be stabilized in a ribosome-dependent manner, reduces GCN2-mediated eIF-2-alpha phosphorylation but not GCN2 autophosphorylation and is lost in amino acid-starved cells and by uncharged tRNAs. Associates (via C-terminus) with ribosomes. Mg(2+) serves as cofactor. Post-translationally, autophosphorylated, autophosphorylation on Thr-882 and Thr-887 increases kinase activity.

It localises to the cytoplasm. The enzyme catalyses L-seryl-[protein] + ATP = O-phospho-L-seryl-[protein] + ADP + H(+). It carries out the reaction L-threonyl-[protein] + ATP = O-phospho-L-threonyl-[protein] + ADP + H(+). With respect to regulation, the integrated stress response (ISR) is activated in response to conditions that promote ribosome collisions: GCN1, which acts as a ribosome collision sensor, activates GCN2. The RQC pathway and the integrated stress response (ISR) antagonize each other: HEL2 prevents the activation of GCN2, while GCN2 suppresses RQC activation. Ribosome stalling-induced integrated stress response prefers ribosomes with empty A sites. The kinase activity is stimulated upon binding to uncharged tRNAs. Metabolic-stress sensing protein kinase that phosphorylates the alpha subunit of eukaryotic translation initiation factor 2 (eIF-2-alpha/SUI2) on 'Ser-52' in response to low amino acid, carbon, or purine availability. Required for adapatation to nutrient starvation by acting as a key component of the integrated stress response (ISR), by which cells alter their translational and transcriptional output in response to starvation. Converts phosphorylated eIF-2-alpha/SUI2 either to a competitive inhibitor of translation initiation factor eIF-2B, leading to a global protein synthesis repression, and thus to a reduced overall utilization of amino acids, or to a translational initiation activation of specific mRNAs, such as the transcriptional activator GCN4, and hence allowing GCN4-mediated reprogramming of transcription to alleviate nutrient depletion. Binds uncharged tRNAs. Binds to aminoacylated tRNA(Phe) less tightly than to deacylated tRNA(Phe). Binds to double-stranded RNA. In Saccharomyces cerevisiae (strain ATCC 204508 / S288c) (Baker's yeast), this protein is eIF-2-alpha kinase GCN2.